A 256-amino-acid chain; its full sequence is Putative ankyrin repeat protein PAE1861 (256 aa).

ANK repeat units follow at residues 1–30 (MDCNNLLNAARRGEAELLTRLLNEGCSPDV), 34–63 (YGRTPLYYAAERGDVGTVDLLIKAGADPNA), 67–92 (EGKTPIIIATQSRKFGVIPLLSASAV), 93–122 (GVEEALYTAARNGCHKAVRYMLARGVRPGA), 124–151 (HGESLLHLVAGDAGLVKLLLEYGVDPNA), 155–184 (HGKTPLHMASEHNCAQCVELLLKRGPDVNV), 188–214 (AGRTPLHYADDVDCIKLLLRYGADLNA), and 218–245 (MGRTPLHYAEDGLAAEALLKRGARPVPD).

In Pyrobaculum aerophilum (strain ATCC 51768 / DSM 7523 / JCM 9630 / CIP 104966 / NBRC 100827 / IM2), this protein is Putative ankyrin repeat protein PAE1861.